Consider the following 422-residue polypeptide: Cyclin-A2 (422 aa).

Met-1 carries the N-acetylmethionine modification. The disordered stretch occupies residues 1–62; sequence MPGTSRHSGR…APQQKLKTRR (62 aa). A Phosphoserine modification is found at Ser-5.

It belongs to the cyclin family. Cyclin AB subfamily. As to quaternary structure, interacts with the CDK1 and CDK2 protein kinases to form serine/threonine kinase holoenzyme complexes. Interacts with CDK1 (hyperphosphorylated form in G1 and underphosphorylated forms in S and G2). Interacts with CDK2; the interaction increases from G1 to G2. Interacts (associated with CDK2 but not with CDK1) with SCAPER; regulates the activity of CCNA2/CDK2 by transiently maintaining CCNA2 in the cytoplasm. Forms a ternary complex with CDK2 and CDKN1B; CDKN1B inhibits the kinase activity of CDK2 through conformational rearrangements. Interacts with INCA1. (Microbial infection) Interacts with mouse cytomegalovirus/MCMV kinase M97; this interaction sequesters CCNA2 to the cytoplasm. Polyubiquitinated via 'Lys-11'-linked ubiquitin by the anaphase-promoting complex (APC/C), leading to its degradation by the proteasome. Deubiquitinated and stabilized by USP37 enables entry into S phase. Ubiquitinated during the G1 phase by the SCF(FBXO31) complex, leading to its proteasomal degradation. Ubiquitous. In the testis, expressed in germ cells and in the ovary, in both germline and somatic cells.

The protein localises to the nucleus. The protein resides in the cytoplasm. Functionally, cyclin which controls both the G1/S and the G2/M transition phases of the cell cycle. Functions through the formation of specific serine/threonine kinase holoenzyme complexes with the cyclin-dependent protein kinases CDK1 and CDK2. The cyclin subunit confers the substrate specificity of these complexes and differentially interacts with and activates CDK1 and CDK2 throughout the cell cycle. This Mus musculus (Mouse) protein is Cyclin-A2.